The chain runs to 141 residues: uncharacterized protein (141 aa).

A Ferritin-like diiron domain is found at 13–141; sequence VTKGTELEKE…LKGILDRYFK (129 aa). 4 residues coordinate Fe cation: Glu63, His66, Glu125, and His128.

This is an uncharacterized protein from Methanocaldococcus jannaschii (strain ATCC 43067 / DSM 2661 / JAL-1 / JCM 10045 / NBRC 100440) (Methanococcus jannaschii).